The following is a 220-amino-acid chain: Deoxyribose-phosphate aldolase (220 aa).

Asp89 (proton donor/acceptor) is an active-site residue. Lys151 (schiff-base intermediate with acetaldehyde) is an active-site residue. Lys180 functions as the Proton donor/acceptor in the catalytic mechanism.

It belongs to the DeoC/FbaB aldolase family. DeoC type 1 subfamily.

It localises to the cytoplasm. It catalyses the reaction 2-deoxy-D-ribose 5-phosphate = D-glyceraldehyde 3-phosphate + acetaldehyde. The protein operates within carbohydrate degradation; 2-deoxy-D-ribose 1-phosphate degradation; D-glyceraldehyde 3-phosphate and acetaldehyde from 2-deoxy-alpha-D-ribose 1-phosphate: step 2/2. Its function is as follows. Catalyzes a reversible aldol reaction between acetaldehyde and D-glyceraldehyde 3-phosphate to generate 2-deoxy-D-ribose 5-phosphate. This chain is Deoxyribose-phosphate aldolase, found in Staphylococcus epidermidis (strain ATCC 35984 / DSM 28319 / BCRC 17069 / CCUG 31568 / BM 3577 / RP62A).